Consider the following 291-residue polypeptide: ATP synthase subunit a (291 aa).

Transmembrane regions (helical) follow at residues 50–70 (LDSMGWSIGLGVIFCLLFWIV), 108–128 (IAPLALTIFVWIFLMNLMDLI), 129–149 (PVDWIPQVAAFVGANVFGMDP), 161–181 (DPNITLGMSLSVFVLILFYSI), 203–223 (PVAKALLIPVNLILELVTFLA), 241–261 (LIFILIALLPFWIQWALSVPW), and 262–282 (AIFHILVITLQAFIFMMLTIV).

This sequence belongs to the ATPase A chain family. As to quaternary structure, F-type ATPases have 2 components, CF(1) - the catalytic core - and CF(0) - the membrane proton channel. CF(1) has five subunits: alpha(3), beta(3), gamma(1), delta(1), epsilon(1). CF(0) has three main subunits: a(1), b(2) and c(9-12). The alpha and beta chains form an alternating ring which encloses part of the gamma chain. CF(1) is attached to CF(0) by a central stalk formed by the gamma and epsilon chains, while a peripheral stalk is formed by the delta and b chains.

Its subcellular location is the cell inner membrane. Key component of the proton channel; it plays a direct role in the translocation of protons across the membrane. In Acinetobacter baumannii (strain AB307-0294), this protein is ATP synthase subunit a.